A 108-amino-acid polypeptide reads, in one-letter code: Thiosulfate sulfurtransferase GlpE (108 aa).

The Rhodanese domain maps to 17 to 105 (RQGAAVLVDI…WHRRFPANVA (89 aa)). The Cysteine persulfide intermediate role is filled by Cys-65.

This sequence belongs to the GlpE family.

The protein resides in the cytoplasm. It catalyses the reaction thiosulfate + hydrogen cyanide = thiocyanate + sulfite + 2 H(+). It carries out the reaction thiosulfate + [thioredoxin]-dithiol = [thioredoxin]-disulfide + hydrogen sulfide + sulfite + 2 H(+). Transferase that catalyzes the transfer of sulfur from thiosulfate to thiophilic acceptors such as cyanide or dithiols. May function in a CysM-independent thiosulfate assimilation pathway by catalyzing the conversion of thiosulfate to sulfite, which can then be used for L-cysteine biosynthesis. This chain is Thiosulfate sulfurtransferase GlpE, found in Salmonella agona (strain SL483).